The sequence spans 122 residues: Small ribosomal subunit protein uS13 (122 aa).

Positions 94-122 are disordered; it reads LSLPVRGQRTKTNSRTRKGKRKTVAGKKK. Residues 101-122 show a composition bias toward basic residues; the sequence is QRTKTNSRTRKGKRKTVAGKKK.

The protein belongs to the universal ribosomal protein uS13 family. As to quaternary structure, part of the 30S ribosomal subunit. Forms a loose heterodimer with protein S19. Forms two bridges to the 50S subunit in the 70S ribosome.

Functionally, located at the top of the head of the 30S subunit, it contacts several helices of the 16S rRNA. In the 70S ribosome it contacts the 23S rRNA (bridge B1a) and protein L5 of the 50S subunit (bridge B1b), connecting the 2 subunits; these bridges are implicated in subunit movement. Contacts the tRNAs in the A and P-sites. This Chlamydia trachomatis serovar A (strain ATCC VR-571B / DSM 19440 / HAR-13) protein is Small ribosomal subunit protein uS13.